We begin with the raw amino-acid sequence, 261 residues long: Syntaxin-7 (261 aa).

Residue serine 2 is modified to N-acetylserine. Residues 2 to 238 lie on the Cytoplasmic side of the membrane; sequence SYTPGIGGDP…NYQRKSRKTL (237 aa). The residue at position 4 (threonine 4) is a Phosphothreonine. Residues 47-68 adopt a coiled-coil conformation; it reads ELRQQLQQEQQYTNQLAKETDK. Residue threonine 79 is modified to Phosphothreonine. Phosphoserine is present on residues serine 125, serine 126, serine 129, and serine 205. Residues 128 to 148 are disordered; it reads VSGGFPEDSSKEKNFVSWESQ. The t-SNARE coiled-coil homology domain maps to 165-227; the sequence is LRLIHERESS…QQANQQLSRA (63 aa). The chain crosses the membrane as a helical; Anchor for type IV membrane protein span at residues 239–259; the sequence is CIIILILVVGIVIIFFIVWGL. The Vesicular portion of the chain corresponds to 260–261; the sequence is KG.

The protein belongs to the syntaxin family. As to quaternary structure, interacts with VPS11, VPS16 and VPS18. Interacts with VPS33A. Forms a SNARE complex with VTI1B, STX8 and VAMP8 which functions in the homotypic fusion of late endosomes. Component of the SNARE complex composed of STX7, STX8, VAMP7 and VTI1B that is required for heterotypic fusion of late endosomes with lysosomes. Interacts with TPC1. In terms of tissue distribution, detected in all tissues tested. Highest expression is found in kidney followed by lung, spleen, heart and brain. Lower expression, in skeletal muscle, liver and testis.

Its subcellular location is the early endosome membrane. Functionally, may be involved in protein trafficking from the plasma membrane to the early endosome (EE) as well as in homotypic fusion of endocytic organelles. Mediates the endocytic trafficking from early endosomes to late endosomes and lysosomes. The polypeptide is Syntaxin-7 (Stx7) (Rattus norvegicus (Rat)).